Consider the following 526-residue polypeptide: Exodeoxyribonuclease 7 large subunit (526 aa).

Residues 497 to 526 (AMTTEGGTPPGGAKKRSTKPAEPTKQGSLF) are disordered.

It belongs to the XseA family. Heterooligomer composed of large and small subunits.

Its subcellular location is the cytoplasm. The catalysed reaction is Exonucleolytic cleavage in either 5'- to 3'- or 3'- to 5'-direction to yield nucleoside 5'-phosphates.. Bidirectionally degrades single-stranded DNA into large acid-insoluble oligonucleotides, which are then degraded further into small acid-soluble oligonucleotides. The polypeptide is Exodeoxyribonuclease 7 large subunit (Rhizobium etli (strain ATCC 51251 / DSM 11541 / JCM 21823 / NBRC 15573 / CFN 42)).